The following is an 859-amino-acid chain: Pre-mRNA-splicing factor SYF1 (859 aa).

HAT repeat units lie at residues 17-49 (NIRNDEDVAFEYEIQKTPQNILTWKRYIEYWKE), 52-84 (RTDKQIRWLYERFCSQFVTDTSIWEDYIRWEST), 88-108 (VETSRIFWLFQRCLKSCVRDC), 123-157 (YDLAMIRHALASSLMKMEREMHRKVWDPVIKFVEE), 177-219 (DEAE…ERYL), 238-271 (RDNITIKSVYEKYLPQDENSGKYLPSSELPFELN), 427-459 (VYSEAILKIDPRKVGTPGSFGRLWCSYGDLYWR), 461-482 (NAISTARELWTQSLKVPYPYIE), 520-554 (ILLEKYKNGHRKIPAQTVLFNSLRIWSKYIDYLEA), 599-633 (YEVMESFQVYEKTIPLFPPEIQYELWIEYLEVATS), 639-675 (LSPEHIRFLFEKALKNLCSNGIDCKTIFIAYSVFEER), 685-718 (EILRRGAVIGTVSVSTHLESRLQLWRMCISKAES), 720-754 (LGPSVTRELYQECIQILPNSKAVEFVIKFSDFESS), and 756-790 (GETIRAREILAYGAKLLPPSRNTELWDSFEIFELK).

Belongs to the crooked-neck family. In terms of assembly, belongs to the NTC complex (or PRP19-associated complex), composed of at least CEF1, CLF1, ISY1, NTC20, SNT309, SYF1, SYF2, and PRP19. The NTC complex associates with the spliceosome after the release of the U1 and U4 snRNAs and forms the CWC spliceosome subcomplex (or CEF1-associated complex) reminiscent of a late-stage spliceosome composed also of the U2, U5 and U6 snRNAs and at least BUD13, BUD31, BRR2, CDC40, CUS1, CWC2, CWC15, CWC21, CWC22, CWC23, CWC24, CWC25, CWC27, ECM2, HSH155, IST3, LEA1, MSL1, PRP8, PRP9, PRP11, PRP21, PRP22, PRP45, PRP46, SLU7, SMB1, SMD1, SMD2, SMD3, SMX2, SMX3, SNU114, SPP2, RSE1 and YJU2. Interacts with CEF1, CLF1, ISY1, NTC20, PRP22, PRP46 and SYF2.

It localises to the nucleus. Functionally, involved in pre-mRNA splicing and cell cycle control. As a component of the NTC complex (or PRP19-associated complex), associates to the spliceosome to mediate conformational rearrangement or to stabilize the structure of the spliceosome after U4 snRNA dissociation, which leads to spliceosome maturation. In Saccharomyces cerevisiae (strain ATCC 204508 / S288c) (Baker's yeast), this protein is Pre-mRNA-splicing factor SYF1 (SYF1).